A 298-amino-acid chain; its full sequence is Ribosomal RNA small subunit methyltransferase H (298 aa).

S-adenosyl-L-methionine-binding positions include 38–40 (GGH), Asp-57, Phe-84, Asp-100, and Gln-107.

This sequence belongs to the methyltransferase superfamily. RsmH family.

The protein resides in the cytoplasm. It carries out the reaction cytidine(1402) in 16S rRNA + S-adenosyl-L-methionine = N(4)-methylcytidine(1402) in 16S rRNA + S-adenosyl-L-homocysteine + H(+). Specifically methylates the N4 position of cytidine in position 1402 (C1402) of 16S rRNA. This is Ribosomal RNA small subunit methyltransferase H from Acaryochloris marina (strain MBIC 11017).